The primary structure comprises 145 residues: Basic phospholipase A2 PC17 (145 aa).

An N-terminal signal peptide occupies residues 1 to 21; the sequence is MYPAHLLLLLAVCVSLLGASA. The propeptide occupies 22–27; the sequence is IPPLPL. Intrachain disulfides connect cysteine 38-cysteine 98, cysteine 54-cysteine 144, cysteine 56-cysteine 72, cysteine 71-cysteine 125, cysteine 78-cysteine 118, cysteine 87-cysteine 111, and cysteine 105-cysteine 116. The Ca(2+) site is built by tyrosine 55, glycine 57, and glycine 59. Residue histidine 75 is part of the active site. Aspartate 76 provides a ligand contact to Ca(2+). Residue aspartate 119 is part of the active site.

It belongs to the phospholipase A2 family. Group I subfamily. D49 sub-subfamily. It depends on Ca(2+) as a cofactor.

It is found in the secreted. It carries out the reaction a 1,2-diacyl-sn-glycero-3-phosphocholine + H2O = a 1-acyl-sn-glycero-3-phosphocholine + a fatty acid + H(+). Its function is as follows. PLA2 catalyzes the calcium-dependent hydrolysis of the 2-acyl groups in 3-sn-phosphoglycerides. In Laticauda laticaudata (Blue-ringed sea krait), this protein is Basic phospholipase A2 PC17.